The chain runs to 329 residues: Cathepsin K (329 aa).

An N-terminal signal peptide occupies residues 1–15; sequence MWVFKFLLLPMVSFA. Residues 16-114 constitute a propeptide, activation peptide; that stretch reads LSPEEMLDTQ…TLYTPEWEGR (99 aa). N-linked (GlcNAc...) asparagine glycosylation occurs at asparagine 103. Disulfide bonds link cysteine 136–cysteine 177 and cysteine 170–cysteine 210. Cysteine 139 is a catalytic residue. A glycan (N-linked (GlcNAc...) asparagine) is linked at asparagine 213. Residues cysteine 269 and cysteine 318 are joined by a disulfide bond. Catalysis depends on residues histidine 276 and asparagine 296.

This sequence belongs to the peptidase C1 family. As to expression, predominantly expressed in bones. Expressed in thyroid epithelial cells.

It is found in the lysosome. The protein localises to the secreted. The protein resides in the apical cell membrane. It catalyses the reaction Broad proteolytic activity. With small-molecule substrates and inhibitors, the major determinant of specificity is P2, which is preferably Leu, Met &gt; Phe, and not Arg.. Thiol protease involved in osteoclastic bone resorption. Displays potent endoprotease activity against fibrinogen at acid pH. May play an important role in extracellular matrix degradation. Involved in the release of thyroid hormone thyroxine (T4) by limited proteolysis of TG/thyroglobulin in the thyroid follicle lumen. This chain is Cathepsin K (Ctsk), found in Mus musculus (Mouse).